Reading from the N-terminus, the 160-residue chain is Bcl-2-like gene 16 protein (160 aa).

Positions 64-84 match the BH1 motif; that stretch reads LLTTEHTTNWGKVVAMLSFSA.

Belongs to the Bcl-2 family.

The chain is Bcl-2-like gene 16 protein (16) from Saimiri sciureus (Common squirrel monkey).